A 569-amino-acid chain; its full sequence is Putative tail sheath protein (569 aa).

The tract at residues 1 to 32 is disordered; the sequence is MAVEQFPRKKVSRPHTEITVDTSGIGGSSSSS.

It localises to the virion. The polypeptide is Putative tail sheath protein (Enterococcus phage phiEF24C (Enterococcus bacteriophage phi-EF24C)).